The chain runs to 944 residues: UvrABC system protein A (944 aa).

Residue 33–40 coordinates ATP; that stretch reads GLSGSGKS. The C4-type zinc-finger motif lies at 252–279; it reads CPICGFSIGELEPRMFSFNSPFGACPTC. 2 ABC transporter domains span residues 309–587 and 607–935; these read WEPT…KKSL and ITDR…QYLK. An ATP-binding site is contributed by 639-646; the sequence is GVSGSGKS. The C4-type zinc-finger motif lies at 738-764; that stretch reads CEACKGDGIIKIEMHFLPDVYVPCEVC.

Belongs to the ABC transporter superfamily. UvrA family. Forms a heterotetramer with UvrB during the search for lesions.

Its subcellular location is the cytoplasm. Functionally, the UvrABC repair system catalyzes the recognition and processing of DNA lesions. UvrA is an ATPase and a DNA-binding protein. A damage recognition complex composed of 2 UvrA and 2 UvrB subunits scans DNA for abnormalities. When the presence of a lesion has been verified by UvrB, the UvrA molecules dissociate. The protein is UvrABC system protein A of Staphylococcus epidermidis (strain ATCC 12228 / FDA PCI 1200).